Here is a 144-residue protein sequence, read N- to C-terminus: SSTTVPATHTSSSSLGPEQYVSSQSNDKHTSDSHPTPTSAHEVTTEFSGRTHYPPEEDDRVQLVHEFSELVIALIIFGVMAGVIGTILFISYGSRRLIKKSESDVQPLPPPDAEVPLSSVEIEDPEETDELNSFTKPNQERNES.

A compositionally biased stretch (polar residues) spans 1-25 (SSTTVPATHTSSSSLGPEQYVSSQS). Residues 1–55 (SSTTVPATHTSSSSLGPEQYVSSQSNDKHTSDSHPTPTSAHEVTTEFSGRTHYPP) form a disordered region. Ser-2 carries O-linked (GalNAc...) serine glycosylation. Residues Thr-3, Thr-4, Thr-8, and Thr-10 are each glycosylated (O-linked (GalNAc...) threonine). Ser-11, Ser-12, Ser-13, Ser-14, Ser-22, and Ser-23 each carry an O-linked (GalNAc...) serine glycan. O-linked (GalNAc...) threonine glycosylation is found at Thr-30, Thr-36, Thr-38, Thr-44, and Thr-45. The segment covering 33–48 (SHPTPTSAHEVTTEFS) has biased composition (polar residues). O-linked (GalNAc...) serine glycosylation is present at Ser-48. Residue Thr-51 is glycosylated (O-linked (GalNAc...) threonine). A helical membrane pass occupies residues 70-92 (LVIALIIFGVMAGVIGTILFISY). The tract at residues 101–144 (SESDVQPLPPPDAEVPLSSVEIEDPEETDELNSFTKPNQERNES) is disordered. Phosphoserine is present on Ser-118. The span at 121-130 (EIEDPEETDE) shows a compositional bias: acidic residues.

It belongs to the glycophorin-A family. As to quaternary structure, homodimer. Component of the ankyrin-1 complex in the erythrocyte, composed of ANK1, RHCE, RHAG, SLC4A1, EPB42, GYPA, GYPB and AQP1. Interacts with SLC4A1; a GYPA monomer is bound at each end of the SLC4A1 dimer forming a heterotetramer.

It localises to the membrane. Its function is as follows. Component of the ankyrin-1 complex, a multiprotein complex involved in the stability and shape of the erythrocyte membrane. Glycophorin A is the major intrinsic membrane protein of the erythrocyte. The N-terminal glycosylated segment, which lies outside the erythrocyte membrane, has MN blood group receptors. Appears to be important for the function of SLC4A1 and is required for high activity of SLC4A1. May be involved in translocation of SLC4A1 to the plasma membrane. This Macaca fuscata fuscata (Japanese macaque) protein is Glycophorin-A.